A 671-amino-acid polypeptide reads, in one-letter code: Spartin (671 aa).

Met1 is modified (N-acetylmethionine). One can recognise an MIT domain in the interval 16-94; that stretch reads IKEAYEKAFM…LQNVRTRLEI (79 aa). Positions 110–175 are disordered; that stretch reads VPKLYPEFPP…CPAEAPPAYS (66 aa). Over residues 118 to 128 the composition is skewed to basic and acidic residues; sequence PPKDACKKSPE. Residue Ser126 is modified to Phosphoserine. Residues 143–158 show a composition bias toward low complexity; sequence GSASAACAGPSGAPSA. The span at 159 to 174 shows a compositional bias: pro residues; the sequence is LPVPSPSCPAEAPPAY. Residues 190–385 form a ubiquitin-binding region (UBR) domain region; the sequence is DSGEFSSVGE…SIDQGSKDAR (196 aa). Residues 193 to 200 carry the LC3-interacting region (LIR); mediates interaction with MAP1LC3A AND MAP1LC3C motif; the sequence is EFSSVGED. Residues 346–421 form a disordered region; that stretch reads FQIPGRSSHP…SSEEKSKELP (76 aa). Residue Lys360 forms a Glycyl lysine isopeptide (Lys-Gly) (interchain with G-Cter in ubiquitin) linkage. Residues 369–379 are compositionally biased toward low complexity; the sequence is QSSSSGSSIDQ. Basic residues predominate over residues 384–393; that stretch reads ARHKGKRGKK. A Senescence domain is found at 431-615; that stretch reads ILSGASWVSW…YNIDNIGIKA (185 aa). Residues 435–507 are required for localization to lipid droplets; that stretch reads ASWVSWGLVK…LVDGVCTVAN (73 aa). A Phosphoserine modification is found at Ser474. The disordered stretch occupies residues 635-671; that stretch reads VERPQRESQGGATSTEGRRDIGKQVEEEKPGAGKKDK. Positions 650 to 671 are enriched in basic and acidic residues; that stretch reads EGRRDIGKQVEEEKPGAGKKDK.

In terms of assembly, interacts with ITCH and WWP1. Interacts (via MIT domain) with IST1; leading to the recruitment of SPART to midbodies. Interacts with MAP1LC3A and MAP1LC3C. Ubiquitinated; ubiquitination does not require ITCH and WWP1. Brain (at protein level).

Its subcellular location is the cytoplasm. It is found in the midbody. It localises to the lipid droplet. In terms of biological role, lipophagy receptor that plays an important role in lipid droplet (LD) turnover in motor neurons. Localizes to LDs and interacts with components of the autophagy machinery, such as MAP1LC3A/C proteins to deliver LDs to autophagosomes for degradation via lipophagy. Lipid transfer protein required for lipid droplet degradation, including by lipophagy. Can bind and transfer all lipid species found in lipid droplets, from phospholipids to triglycerides and sterol esters but the direction of lipid transfer by spartin and its cargos are unknown. May be implicated in endosomal trafficking, or microtubule dynamics, or both. Participates in cytokinesis. In Mus musculus (Mouse), this protein is Spartin.